We begin with the raw amino-acid sequence, 208 residues long: Superoxide dismutase [Mn] 2 (208 aa).

His-28, His-83, Asp-165, and His-169 together coordinate Mn(2+).

The protein belongs to the iron/manganese superoxide dismutase family. As to quaternary structure, homodimer. Mn(2+) serves as cofactor.

The enzyme catalyses 2 superoxide + 2 H(+) = H2O2 + O2. Its function is as follows. Destroys superoxide anion radicals which are normally produced within the cells and which are toxic to biological systems. The chain is Superoxide dismutase [Mn] 2 (sodA2) from Bacillus cereus (strain ATCC 14579 / DSM 31 / CCUG 7414 / JCM 2152 / NBRC 15305 / NCIMB 9373 / NCTC 2599 / NRRL B-3711).